The primary structure comprises 439 residues: Phenylacetate-coenzyme A ligase (439 aa).

This sequence belongs to the phenylacetyl-CoA ligase family. Monomer.

The catalysed reaction is 2-phenylacetate + ATP + CoA = phenylacetyl-CoA + AMP + diphosphate. It functions in the pathway aromatic compound metabolism; phenylacetate degradation. Its activity is regulated as follows. Inhibited by divalent cations (zinc, copper, mercury) and by the sulfhydryl reagents 5,5-dithiobis(2-nitrobenzoic acid), N-ethylmaleimide and p-chloromercuribenzoate. Functionally, catalyzes the activation of phenylacetic acid (PA) to phenylacetyl-CoA (PA-CoA). Involved in the phenylalanine metabolism. Can also use CTP and UTP as substrate. The polypeptide is Phenylacetate-coenzyme A ligase (paaK) (Pseudomonas putida (Arthrobacter siderocapsulatus)).